The following is a 756-amino-acid chain: Probable chemoreceptor y4sI (756 aa).

A run of 2 helical transmembrane segments spans residues 26–46 (VCVA…TSVA) and 330–350 (LIKI…MAIL). HAMP domains follow at residues 353-406 (RSIS…ARVA) and 434-486 (DEQA…ETIR). In terms of domain architecture, Methyl-accepting transducer spans 491–720 (QAASMSSIVS…ESDAACRSLN (230 aa)). Residues 736–756 (GGGSSTRQPQSPPTQRYFMSR) are disordered.

It belongs to the methyl-accepting chemotaxis (MCP) protein family.

Its subcellular location is the cell membrane. Its function is as follows. Chemotactic-signal transducers respond to changes in the concentration of attractants and repellents in the environment, transduce a signal from the outside to the inside of the cell, and facilitate sensory adaptation through the variation of the level of methylation. Attractants increase the level of methylation while repellents decrease the level of methylation. This chain is Probable chemoreceptor y4sI, found in Sinorhizobium fredii (strain NBRC 101917 / NGR234).